Reading from the N-terminus, the 408-residue chain is Leucine aminopeptidase 1 (408 aa).

The N-terminal stretch at 1-16 is a signal peptide; it reads MKVSSAIALLLPVVAA. Residues 17–89 constitute a propeptide that is removed on maturation; sequence RFVDSAFEQD…SAQSATTGPA (73 aa). Asn-95, Asn-108, and Asn-182 each carry an N-linked (GlcNAc...) asparagine glycan. Residues His-190, Asp-209, Glu-248, and Asp-275 each contribute to the Zn(2+) site. A disulfide bridge connects residues Cys-324 and Cys-328. A Zn(2+)-binding site is contributed by His-357.

This sequence belongs to the peptidase M28 family. M28E subfamily. In terms of assembly, monomer. Zn(2+) is required as a cofactor.

Its subcellular location is the secreted. Its function is as follows. Extracellular aminopeptidase that allows assimilation of proteinaceous substrates. This Grosmannia clavigera (strain kw1407 / UAMH 11150) (Blue stain fungus) protein is Leucine aminopeptidase 1 (LAP1).